The sequence spans 300 residues: Sulfate adenylyltransferase subunit 2 (300 aa).

The disordered stretch occupies residues 281 to 300; sequence RAIDRDEAGSMEKKKREGYF.

The protein belongs to the PAPS reductase family. CysD subfamily. Heterodimer composed of CysD, the smaller subunit, and CysN.

The catalysed reaction is sulfate + ATP + H(+) = adenosine 5'-phosphosulfate + diphosphate. Its pathway is sulfur metabolism; hydrogen sulfide biosynthesis; sulfite from sulfate: step 1/3. In terms of biological role, with CysN forms the ATP sulfurylase (ATPS) that catalyzes the adenylation of sulfate producing adenosine 5'-phosphosulfate (APS) and diphosphate, the first enzymatic step in sulfur assimilation pathway. APS synthesis involves the formation of a high-energy phosphoric-sulfuric acid anhydride bond driven by GTP hydrolysis by CysN coupled to ATP hydrolysis by CysD. The chain is Sulfate adenylyltransferase subunit 2 from Brucella canis (strain ATCC 23365 / NCTC 10854 / RM-666).